The chain runs to 134 residues: Small ribosomal subunit protein uS8 (134 aa).

It belongs to the universal ribosomal protein uS8 family. Part of the 30S ribosomal subunit. Contacts proteins S5 and S12.

In terms of biological role, one of the primary rRNA binding proteins, it binds directly to 16S rRNA central domain where it helps coordinate assembly of the platform of the 30S subunit. This chain is Small ribosomal subunit protein uS8, found in Nitratiruptor sp. (strain SB155-2).